A 506-amino-acid chain; its full sequence is Histone deacetylase complex subunit CTI6 (506 aa).

The interval 49–71 is disordered; it reads EESVKQEDVPMEGGEGEVEEEEG. A compositionally biased stretch (acidic residues) spans 62–71; it reads GEGEVEEEEG. The PHD-type zinc finger occupies 72 to 123; the sequence is ETRCICGELDTPDDSGFFIQCEQCSSWQHGYCVSITQDNAPDKYWCEQCRPE. Positions 138–425 are disordered; the sequence is IYKPVQEKRR…KPRLPPQRTS (288 aa). Threonine 174 bears the Phosphothreonine mark. Position 175 is a phosphoserine (serine 175). Residue threonine 177 is modified to Phosphothreonine. A compositionally biased stretch (acidic residues) spans 179–195; that stretch reads DNVDDIGDEEDEVEDEA. Residues serine 216 and serine 267 each carry the phosphoserine modification. 2 stretches are compositionally biased toward basic and acidic residues: residues 231–271 and 312–342; these read DSDK…HQED and DDMK…EKES. Basic residues predominate over residues 373–393; the sequence is ASSRGSKRVSKPARKGNRTRR. Residues 394 to 404 are compositionally biased toward polar residues; that stretch reads SNTSSDTNQNR. Residues 405-415 are compositionally biased toward basic and acidic residues; sequence RSADIGTDKPV.

As to quaternary structure, component of the RPD3C(L) complex composed of at least ASH1, CTI6, DEP1, PHO23, RPD3, RXT2, RXT3, SAP30, SDS3, SIN3, UME1 and UME6. Interacts with CYC8.

The protein resides in the nucleus. Component of the RPD3C(L) histone deacetylase complex (HDAC). Responsible for the deacetylation of lysine residues on the N-terminal part of the core histones (H2A, H2B, H3 and H4). Histone deacetylation gives a tag for epigenetic repression and plays an important role in transcriptional regulation, cell cycle progression and developmental events. CTI6 links the SAGA coactivator to the CYC8-TUP1 corepressor. Involved in transcription regulation of heme-regulated genes and required for GCN5 recruitment, histone H3 acetylation and SPT15/TBP binding to promoters. This chain is Histone deacetylase complex subunit CTI6 (CTI6), found in Saccharomyces cerevisiae (strain ATCC 204508 / S288c) (Baker's yeast).